The primary structure comprises 467 residues: MKSVLASGALTLAFSLAALAADAFQASSWDSTHIIRRDVVIVGGGAAGTYAAIRLKDHGKSVVLVERRDRLGGHAVTYKDPNTGGSVDYGVQVYDNNTVVRDFFSRLNTPLADLSFASFGKPVYADFEEGMLLNLTAGTLGQDYINELNKYPYLDNGFELPDPVPEDLLLPWVEYIGKYNIDLSTAIATLARPAVTGNLLNILAIYVFNNLNHLLLHEMSGAVVVNANRDNSQLYRNAVSELQPDLLLRSRVVAGQRRTRKRDGVRLVVDTPTGRKLIIAKQLIVGMPPILDNMRTFGLDSHEHSVLSHIYGLPYYGGVVSDTGLAPGFSFKNYAANTSYNLAEIPSVVAFNPSSVDGLFYYWYNAPQPVSQRRIETEARDAIKTLQRLTNSTTQPEPKFLAFSDFAPYQLRVSAEAIRNGFYDDMYGLQGHRNTWYTGTLFVTGSSQVWNNTEVMLPEILAAVNSS.

The N-terminal stretch at 1-20 (MKSVLASGALTLAFSLAALA) is a signal peptide. Residues N96, N134, N337, N391, and N451 are each glycosylated (N-linked (GlcNAc...) asparagine).

The protein belongs to the beta-cyclopiazonate dehydrogenase family. The cofactor is FAD.

It participates in secondary metabolite biosynthesis. Functionally, FAD-dependent oxidoreductase; part of the gene cluster that mediates the biosynthesis of the antibiotic 2,4-dihydroxy-3-methyl-6-(2-oxopropyl)benzaldehyde (DHMBA) and its derivatives. The direct non-reducing polyketide synthase dbaI product is 2,4-dihydroxy-3-methyl-6-(2-oxopropyl)benzaldehyde (DHMBA), produced by condensation of one acetyl-CoA starter unit with 4 malonyl-CoA units and one methylation step. The FAD-dependent monooxygenase dbaH is responsible for the synthesis of yellow pigments derived from the oxidation of DHMBA. The roles of dbaB, C, E and F have still to be determined. In Emericella nidulans (strain FGSC A4 / ATCC 38163 / CBS 112.46 / NRRL 194 / M139) (Aspergillus nidulans), this protein is FAD-dependent oxidoreductase dbaF.